The following is a 246-amino-acid chain: MDWQKITEKMCDFIQEKVKNSQSQGVVLGLSGGIDSALVATLCKRALKENVFALLMPTQISNKANLEDALRLCADLNLEYKIIEIQSILDAFIKQSENTTLVSLGNFAARIRMSLLYDYSALKNSLVIGTSNKSELLLGYGTIYGDLACAFNPIGSLYKSEIYTLAKYLNLHENFIKKAPSADLWENQSDEADLGFSYAKIDEGLKALETNDEKLLRTLDPSLIAMLKNRMQKNTFKGKMPEILEI.

Gly-29–Ser-36 lines the ATP pocket. Position 35 (Asp-35) interacts with Mg(2+). Arg-110 contributes to the deamido-NAD(+) binding site. Thr-130 lines the ATP pocket. Glu-135 serves as a coordination point for Mg(2+). Residues Lys-159 and Ser-181 each contribute to the ATP site.

Belongs to the NAD synthetase family. As to quaternary structure, homodimer.

The enzyme catalyses deamido-NAD(+) + NH4(+) + ATP = AMP + diphosphate + NAD(+) + H(+). Its pathway is cofactor biosynthesis; NAD(+) biosynthesis; NAD(+) from deamido-NAD(+) (ammonia route): step 1/1. In terms of biological role, catalyzes the ATP-dependent amidation of deamido-NAD to form NAD. Uses ammonia as a nitrogen source. The chain is NH(3)-dependent NAD(+) synthetase from Campylobacter jejuni subsp. jejuni serotype O:6 (strain 81116 / NCTC 11828).